Consider the following 142-residue polypeptide: MAKKVQAYVKLQVAAGMANPSPPVGPALGQQGVNIMEFCKAFNAKTESIEKGLPIPVVITVYSDRSFTFVTKTPPAAVLLKKAAGIKSGSGVPNKDKVGKVTSAQVREIAETKAADMTGSDVEAMMRSIEGTAHSMGLVVEG.

This sequence belongs to the universal ribosomal protein uL11 family. Part of the ribosomal stalk of the 50S ribosomal subunit. Interacts with L10 and the large rRNA to form the base of the stalk. L10 forms an elongated spine to which L12 dimers bind in a sequential fashion forming a multimeric L10(L12)X complex. In terms of processing, one or more lysine residues are methylated.

Functionally, forms part of the ribosomal stalk which helps the ribosome interact with GTP-bound translation factors. This Yersinia pestis bv. Antiqua (strain Angola) protein is Large ribosomal subunit protein uL11.